We begin with the raw amino-acid sequence, 1167 residues long: Melanoma receptor tyrosine-protein kinase (1167 aa).

The N-terminal stretch at 1–25 is a signal peptide; sequence MEFLRGGAALLQLLLVLSISRCCST. Residues 26-642 are Extracellular-facing; that stretch reads DPDRKVCQGT…GCRGDIVSHS (617 aa). 3 N-linked (GlcNAc...) asparagine glycosylation sites follow: Asn-114, Asn-144, and Asn-201. 11 disulfide bridges follow: Cys-195–Cys-204, Cys-199–Cys-212, Cys-220–Cys-228, Cys-224–Cys-236, Cys-237–Cys-245, Cys-241–Cys-253, Cys-256–Cys-265, Cys-269–Cys-296, Cys-300–Cys-311, Cys-315–Cys-330, and Cys-333–Cys-337. Asn-356, Asn-365, Asn-398, Asn-417, and Asn-501 each carry an N-linked (GlcNAc...) asparagine glycan. Disulfide bonds link Cys-504-Cys-513, Cys-508-Cys-521, Cys-524-Cys-533, Cys-537-Cys-553, Cys-556-Cys-569, Cys-560-Cys-577, Cys-593-Cys-615, Cys-618-Cys-626, and Cys-622-Cys-634. Asn-576 is a glycosylation site (N-linked (GlcNAc...) asparagine). Asn-621 carries N-linked (GlcNAc...) asparagine glycosylation. Residues 643–665 form a helical membrane-spanning segment; that stretch reads SLAVGLVSGLLITVIVALLIVVL. The Cytoplasmic portion of the chain corresponds to 666–1167; it reads LRRRRIKRKR…QGGALYTPVR (502 aa). The Protein kinase domain maps to 710–977; it reads FKKDRVLGSG…QMARDPSRYL (268 aa). Residues 716-724 and Lys-743 contribute to the ATP site; that span reads LGSGAFGTV. Asp-835 functions as the Proton acceptor in the catalytic mechanism.

Belongs to the protein kinase superfamily. Tyr protein kinase family. EGF receptor subfamily.

It is found in the membrane. The catalysed reaction is L-tyrosyl-[protein] + ATP = O-phospho-L-tyrosyl-[protein] + ADP + H(+). Probable receptor with tyrosine-protein kinase activity. The polypeptide is Melanoma receptor tyrosine-protein kinase (xmrk) (Xiphophorus maculatus (Southern platyfish)).